A 466-amino-acid chain; its full sequence is 3-isopropylmalate dehydratase large subunit (466 aa).

[4Fe-4S] cluster-binding residues include C347, C407, and C410.

The protein belongs to the aconitase/IPM isomerase family. LeuC type 1 subfamily. Heterodimer of LeuC and LeuD. It depends on [4Fe-4S] cluster as a cofactor.

The enzyme catalyses (2R,3S)-3-isopropylmalate = (2S)-2-isopropylmalate. It functions in the pathway amino-acid biosynthesis; L-leucine biosynthesis; L-leucine from 3-methyl-2-oxobutanoate: step 2/4. Catalyzes the isomerization between 2-isopropylmalate and 3-isopropylmalate, via the formation of 2-isopropylmaleate. This chain is 3-isopropylmalate dehydratase large subunit, found in Shigella boydii serotype 4 (strain Sb227).